Reading from the N-terminus, the 349-residue chain is Ferredoxin--NADP reductase 1 (349 aa).

FAD contacts are provided by Glu36, Lys44, Tyr48, Val88, Leu123, Asp290, and Ser331.

This sequence belongs to the ferredoxin--NADP reductase type 2 family. Homodimer. It depends on FAD as a cofactor.

It carries out the reaction 2 reduced [2Fe-2S]-[ferredoxin] + NADP(+) + H(+) = 2 oxidized [2Fe-2S]-[ferredoxin] + NADPH. The sequence is that of Ferredoxin--NADP reductase 1 from Bacillus cytotoxicus (strain DSM 22905 / CIP 110041 / 391-98 / NVH 391-98).